Here is a 90-residue protein sequence, read N- to C-terminus: MVKNAFISVISQEEKEENKGSAEFQVFNFTNKIRRLTSHLELHRKDYLSQRGLRKILGKRQRLLAYLSKKNKVRYKELISQLDIREPKIR.

It belongs to the universal ribosomal protein uS15 family. Part of the 30S ribosomal subunit.

The protein resides in the plastid. It localises to the chloroplast. This Platanus occidentalis (Sycamore) protein is Small ribosomal subunit protein uS15c (rps15).